Consider the following 77-residue polypeptide: uncharacterized protein (77 aa).

The HTH cro/C1-type domain maps to 13-67; that stretch reads VLQYMVNNDYSLNQLALEIGVSPATLSRVLNGERRPGQLVIGKMLHYFNLKFEDL. A DNA-binding region (H-T-H motif) is located at residues 24-43; the sequence is LNQLALEIGVSPATLSRVLN.

It is found in the cytoplasm. This is an uncharacterized protein from Bacillus subtilis (strain 168).